The primary structure comprises 166 residues: Large ribosomal subunit protein uL10 (166 aa).

It belongs to the universal ribosomal protein uL10 family. As to quaternary structure, part of the ribosomal stalk of the 50S ribosomal subunit. The N-terminus interacts with L11 and the large rRNA to form the base of the stalk. The C-terminus forms an elongated spine to which L12 dimers bind in a sequential fashion forming a multimeric L10(L12)X complex.

In terms of biological role, forms part of the ribosomal stalk, playing a central role in the interaction of the ribosome with GTP-bound translation factors. The chain is Large ribosomal subunit protein uL10 from Enterococcus faecalis (strain ATCC 700802 / V583).